A 121-amino-acid polypeptide reads, in one-letter code: Large ribosomal subunit protein bL12 (121 aa).

Belongs to the bacterial ribosomal protein bL12 family. Homodimer. Part of the ribosomal stalk of the 50S ribosomal subunit. Forms a multimeric L10(L12)X complex, where L10 forms an elongated spine to which 2 to 4 L12 dimers bind in a sequential fashion. Binds GTP-bound translation factors.

Forms part of the ribosomal stalk which helps the ribosome interact with GTP-bound translation factors. Is thus essential for accurate translation. This Ureaplasma parvum serovar 3 (strain ATCC 27815 / 27 / NCTC 11736) protein is Large ribosomal subunit protein bL12.